The following is a 177-amino-acid chain: Coatomer subunit zeta-1 (177 aa).

N-acetylmethionine is present on Met1.

The protein belongs to the adaptor complexes small subunit family. As to quaternary structure, oligomeric complex that consists of at least the alpha, beta, beta', gamma, delta, epsilon and zeta subunits.

The protein resides in the cytoplasm. Its subcellular location is the golgi apparatus membrane. It is found in the cytoplasmic vesicle. It localises to the COPI-coated vesicle membrane. The coatomer is a cytosolic protein complex that binds to dilysine motifs and reversibly associates with Golgi non-clathrin-coated vesicles, which further mediate biosynthetic protein transport from the ER, via the Golgi up to the trans Golgi network. Coatomer complex is required for budding from Golgi membranes, and is essential for the retrograde Golgi-to-ER transport of dilysine-tagged proteins. The zeta subunit may be involved in regulating the coat assembly and, hence, the rate of biosynthetic protein transport due to its association-dissociation properties with the coatomer complex. The chain is Coatomer subunit zeta-1 (COPZ1) from Bos taurus (Bovine).